A 563-amino-acid polypeptide reads, in one-letter code: Inositol-3-phosphate synthase 1-B (563 aa).

The protein belongs to the myo-inositol 1-phosphate synthase family. Requires NAD(+) as cofactor.

It is found in the cytoplasm. It catalyses the reaction D-glucose 6-phosphate = 1D-myo-inositol 3-phosphate. The protein operates within polyol metabolism; myo-inositol biosynthesis; myo-inositol from D-glucose 6-phosphate: step 1/2. Its function is as follows. Key enzyme in myo-inositol biosynthesis pathway that catalyzes the conversion of glucose 6-phosphate to 1-myo-inositol 1-phosphate in a NAD-dependent manner. Rate-limiting enzyme in the synthesis of all inositol-containing compounds. In Xenopus laevis (African clawed frog), this protein is Inositol-3-phosphate synthase 1-B (isyna1-b).